A 331-amino-acid polypeptide reads, in one-letter code: NmrA-like family domain-containing oxidoreductase himF (331 aa).

NADP(+) contacts are provided by residues 8–13, 34–38, 55–56, 76–78, lysine 133, and 155–167; these read GATGNQ, RNAES, DG, TNG, and WFFE…QMAA.

It belongs to the NmrA-type oxidoreductase family.

It functions in the pathway secondary metabolite biosynthesis. NmrA-like family domain-containing oxidoreductase; part of the him gene cluster that mediates the biosynthesis of himeic acid A, a ubiquitin-activating enzyme (E1) inhibitor. First, himA, together with the trans-enoyl reductase himH, catalyzes the formation of apolyketide chain, which is then condensed with leucine by the NRPS activity of himA. Dieckmann cyclization and release from himA gives a tetramic acid intermediate as the product of himA PKS-NRPS. HimG then catalyzes alpha-oxidation of the tetramic acid ring, with a subsequent rearrangement to yield apyrone intermediate. Two terminal methyl groups of polyketide and amide side chains are oxidized to carboxylic acids by himC cytochrome P450 monooxygenase to form himeic acid A. Himeic acid A is further converted to himeic acid B and C during culture growth. No gene responsible for pyrone to pyridone conversion was found in the him gene cluster and himeic acid A is non-enzymatically converted to himeic acid C by the incorporation of an ammonium nitrogen atom in a pH5 buffer, and to himeic acid B at a conversion ratio of 50% during incubation in MeOH for 5 days. The polypeptide is NmrA-like family domain-containing oxidoreductase himF (Aspergillus japonicus).